The following is a 472-amino-acid chain: Cysteine--tRNA ligase (472 aa).

Residue Cys-29 coordinates Zn(2+). Positions 31–41 (ITVYDYCHLGH) match the 'HIGH' region motif. Zn(2+)-binding residues include Cys-214, His-239, and Glu-243. A 'KMSKS' region motif is present at residues 271 to 275 (KMSKS). Lys-274 is a binding site for ATP.

It belongs to the class-I aminoacyl-tRNA synthetase family. In terms of assembly, monomer. Requires Zn(2+) as cofactor.

It is found in the cytoplasm. It catalyses the reaction tRNA(Cys) + L-cysteine + ATP = L-cysteinyl-tRNA(Cys) + AMP + diphosphate. In Picosynechococcus sp. (strain ATCC 27264 / PCC 7002 / PR-6) (Agmenellum quadruplicatum), this protein is Cysteine--tRNA ligase.